Here is a 193-residue protein sequence, read N- to C-terminus: ATP-dependent Clp protease proteolytic subunit (193 aa).

Serine 97 functions as the Nucleophile in the catalytic mechanism. Histidine 122 is an active-site residue.

It belongs to the peptidase S14 family. As to quaternary structure, fourteen ClpP subunits assemble into 2 heptameric rings which stack back to back to give a disk-like structure with a central cavity, resembling the structure of eukaryotic proteasomes.

Its subcellular location is the cytoplasm. The catalysed reaction is Hydrolysis of proteins to small peptides in the presence of ATP and magnesium. alpha-casein is the usual test substrate. In the absence of ATP, only oligopeptides shorter than five residues are hydrolyzed (such as succinyl-Leu-Tyr-|-NHMec, and Leu-Tyr-Leu-|-Tyr-Trp, in which cleavage of the -Tyr-|-Leu- and -Tyr-|-Trp bonds also occurs).. Functionally, cleaves peptides in various proteins in a process that requires ATP hydrolysis. Has a chymotrypsin-like activity. Plays a major role in the degradation of misfolded proteins. The chain is ATP-dependent Clp protease proteolytic subunit from Fusobacterium nucleatum subsp. nucleatum (strain ATCC 25586 / DSM 15643 / BCRC 10681 / CIP 101130 / JCM 8532 / KCTC 2640 / LMG 13131 / VPI 4355).